The chain runs to 67 residues: Protein AaeX (67 aa).

2 consecutive transmembrane segments (helical) span residues 3-23 (LFPV…ELLL) and 43-63 (FVWH…YLIS).

This sequence belongs to the AaeX family.

It localises to the cell membrane. The polypeptide is Protein AaeX (Escherichia coli (strain K12 / DH10B)).